A 326-amino-acid polypeptide reads, in one-letter code: Vacuolar protein sorting-associated protein 26A-A (326 aa).

The disordered stretch occupies residues 306 to 326 (TNFHQRFEPQEPQASAEEPEI). The segment covering 315 to 326 (QEPQASAEEPEI) has biased composition (low complexity).

The protein belongs to the VPS26 family. As to quaternary structure, component of the heterotrimeric retromer cargo-selective complex (CSC) which is believed to associate with variable sorting nexins to form functionally distinct retromer complex variants.

It is found in the cytoplasm. Its subcellular location is the endosome membrane. The protein localises to the early endosome. Its function is as follows. Acts as a component of the retromer cargo-selective complex (CSC). The CSC is believed to be the core functional component of retromer or respective retromer complex variants acting to prevent missorting of selected transmembrane cargo proteins into the lysosomal degradation pathway. Retromer mediates retrograde transport of cargo proteins from endosomes to the trans-Golgi network (TGN). The chain is Vacuolar protein sorting-associated protein 26A-A (vps26a-a) from Xenopus laevis (African clawed frog).